A 901-amino-acid chain; its full sequence is Cyanophycin synthetase (901 aa).

Residues lysine 224–phenylalanine 478 enclose the ATP-grasp domain. Glycine 493–threonine 499 lines the ATP pocket.

The protein in the C-terminal section; belongs to the MurCDEF family. As to quaternary structure, homodimer.

It carries out the reaction [L-4-(L-arginin-2-N-yl)aspartate](n) + L-aspartate + ATP = [L-4-(L-arginin-2-N-yl)aspartate](n)-L-aspartate + ADP + phosphate + H(+). It catalyses the reaction [L-4-(L-arginin-2-N-yl)aspartate](n)-L-aspartate + L-arginine + ATP = [L-4-(L-arginin-2-N-yl)aspartate](n+1) + ADP + phosphate + H(+). Catalyzes the ATP-dependent polymerization of arginine and aspartate to multi-L-arginyl-poly-L-aspartic acid (cyanophycin; a water-insoluble reserve polymer). The sequence is that of Cyanophycin synthetase (cphA) from Trichormus variabilis (strain ATCC 29413 / PCC 7937) (Anabaena variabilis).